We begin with the raw amino-acid sequence, 161 residues long: Phosphopantetheine adenylyltransferase (161 aa).

Thr11 contacts substrate. Residues 11-12 (TF) and His19 each bind ATP. Substrate contacts are provided by Lys43, Thr75, and Arg89. ATP-binding positions include 90–92 (GLR), Glu100, and 125–131 (YSFLSSS).

Belongs to the bacterial CoaD family. Homohexamer. The cofactor is Mg(2+).

The protein localises to the cytoplasm. It carries out the reaction (R)-4'-phosphopantetheine + ATP + H(+) = 3'-dephospho-CoA + diphosphate. Its pathway is cofactor biosynthesis; coenzyme A biosynthesis; CoA from (R)-pantothenate: step 4/5. Reversibly transfers an adenylyl group from ATP to 4'-phosphopantetheine, yielding dephospho-CoA (dPCoA) and pyrophosphate. In Listeria innocua serovar 6a (strain ATCC BAA-680 / CLIP 11262), this protein is Phosphopantetheine adenylyltransferase.